A 206-amino-acid polypeptide reads, in one-letter code: Proteasome subunit beta 2 (206 aa).

Residues M1–K7 constitute a propeptide, removed in mature form; by autocatalysis. Residue T8 is the Nucleophile of the active site.

It belongs to the peptidase T1B family. The 20S proteasome core is composed of 14 alpha and 14 beta subunits that assemble into four stacked heptameric rings, resulting in a barrel-shaped structure. The two inner rings, each composed of seven catalytic beta subunits, are sandwiched by two outer rings, each composed of seven alpha subunits. The catalytic chamber with the active sites is on the inside of the barrel. Has a gated structure, the ends of the cylinder being occluded by the N-termini of the alpha-subunits. Is capped at one or both ends by the proteasome regulatory ATPase, PAN.

The protein localises to the cytoplasm. It catalyses the reaction Cleavage of peptide bonds with very broad specificity.. The formation of the proteasomal ATPase PAN-20S proteasome complex, via the docking of the C-termini of PAN into the intersubunit pockets in the alpha-rings, triggers opening of the gate for substrate entry. Interconversion between the open-gate and close-gate conformations leads to a dynamic regulation of the 20S proteasome proteolysis activity. In terms of biological role, component of the proteasome core, a large protease complex with broad specificity involved in protein degradation. The chain is Proteasome subunit beta 2 from Desulfurococcus amylolyticus (strain DSM 18924 / JCM 16383 / VKM B-2413 / 1221n) (Desulfurococcus kamchatkensis).